Reading from the N-terminus, the 79-residue chain is UPF0154 protein lwe1321 (79 aa).

The helical transmembrane segment at W2–I22 threads the bilayer. The segment covering K57–N66 has biased composition (polar residues). The tract at residues K57–K79 is disordered.

It belongs to the UPF0154 family.

The protein localises to the cell membrane. The polypeptide is UPF0154 protein lwe1321 (Listeria welshimeri serovar 6b (strain ATCC 35897 / DSM 20650 / CCUG 15529 / CIP 8149 / NCTC 11857 / SLCC 5334 / V8)).